Here is a 277-residue protein sequence, read N- to C-terminus: uncharacterized protein (277 aa).

This is an uncharacterized protein from Acanthamoeba polyphaga mimivirus (APMV).